Here is a 1159-residue protein sequence, read N- to C-terminus: ATP-dependent helicase/deoxyribonuclease subunit B (1159 aa).

Residues 1–275 (MEFNTYIGRA…TYFNTFYRYN (275 aa)) form the UvrD-like helicase ATP-binding domain. Residue 8–15 (GRAGTGKS) coordinates ATP. Residues 269–583 (NTFYRYNNDD…SIGTMDLAKV (315 aa)) form the UvrD-like helicase C-terminal domain. Residues Cys-784, Cys-1112, Cys-1115, and Cys-1121 each contribute to the [4Fe-4S] cluster site.

The protein belongs to the helicase family. AddB/RexB type 1 subfamily. In terms of assembly, heterodimer of AddA and AddB. Mg(2+) serves as cofactor. The cofactor is [4Fe-4S] cluster.

Functionally, the heterodimer acts as both an ATP-dependent DNA helicase and an ATP-dependent, dual-direction single-stranded exonuclease. Recognizes the chi site generating a DNA molecule suitable for the initiation of homologous recombination. The AddB subunit has 5' -&gt; 3' nuclease activity but not helicase activity. The sequence is that of ATP-dependent helicase/deoxyribonuclease subunit B from Staphylococcus epidermidis (strain ATCC 35984 / DSM 28319 / BCRC 17069 / CCUG 31568 / BM 3577 / RP62A).